A 634-amino-acid chain; its full sequence is MRIDCTVASLTALASGCQALSTRPYVPRGHSLSRRDDSAPIYRDASYCIDERVDDLLARMTIEEKAGQLFHTRLMDGPLDDEGSGNNAHNSTSNMIGEKHMTHFNLASDITNATETAEFINRIQELALQTRLGIPVTVSTDPRHSFTENVGTGFKAGVFSQWPESIGLAALRDPYVVRKFAEVAKEEYIAVGIRAALHPQVDLSTEPRWARISNTWGENSTLTSELLVEYIKGFQGDKLGPQSVKTVTKHFPGGGPVENGEDSHFAYGKNQTYPGNNLEEHLKPFKAAIAAGATEIMPYYSRPIGTEYEPVAFSFNKRIVTELLRNELGFEGIVLTDWGLITDGYIAGQYMPARAWGVENLTELERAARILDAGCDQFGGEERPELIVQLVQEGTVSEDRIDVSVRRLLREKFVLGLFDNPFVDPESAGRVVGNDYFVRLGREAQRRSYTLLSNNEDIVPLKKIEQSTKFYIEGFNASFIESWNYTVVDSPEEADYALLRYNAPYEPRPGGFEANMHAGSLAFNDTEKARQAKIYSTVPTIVDIVMDRPAVIPEIIEQAKAVFASYGSDSNAFLDVVFGVSAPEGKLPFDLPSSMEAVEAQMEDVPFDTRNPVFKFGHGLSYANPCASSSSKCS.

An N-terminal signal peptide occupies residues 1–19 (MRIDCTVASLTALASGCQA). 4 N-linked (GlcNAc...) asparagine glycosylation sites follow: N90, N112, N219, and N270. D337 is a catalytic residue. N360, N476, N484, and N524 each carry an N-linked (GlcNAc...) asparagine glycan.

The protein belongs to the glycosyl hydrolase 3 family.

Its subcellular location is the secreted. The catalysed reaction is Hydrolysis of terminal, non-reducing beta-D-glucosyl residues with release of beta-D-glucose.. It participates in glycan metabolism; cellulose degradation. In terms of biological role, beta-glucosidases are one of a number of cellulolytic enzymes involved in the degradation of cellulosic biomass. Catalyzes the last step releasing glucose from the inhibitory cellobiose. The protein is Probable beta-glucosidase C (bglC) of Aspergillus flavus (strain ATCC 200026 / FGSC A1120 / IAM 13836 / NRRL 3357 / JCM 12722 / SRRC 167).